A 124-amino-acid polypeptide reads, in one-letter code: Quinol oxidase subunit 4 (124 aa).

The next 3 membrane-spanning stretches (helical) occupy residues 16–36 (IVGF…AVYT), 44–64 (LWII…MFMH), and 78–98 (TLFG…IFAA).

This sequence belongs to the cytochrome c oxidase bacterial subunit 4 family.

It localises to the cell membrane. The enzyme catalyses 2 a quinol + O2 = 2 a quinone + 2 H2O. Its function is as follows. Catalyzes quinol oxidation with the concomitant reduction of oxygen to water. Major component for energy conversion during vegetative growth. The chain is Quinol oxidase subunit 4 (qoxD) from Bacillus spizizenii (strain ATCC 23059 / NRRL B-14472 / W23) (Bacillus subtilis subsp. spizizenii).